Reading from the N-terminus, the 111-residue chain is Nucleoid-associated protein Teth39_2199 (111 aa).

This sequence belongs to the YbaB/EbfC family. Homodimer.

Its subcellular location is the cytoplasm. The protein localises to the nucleoid. Binds to DNA and alters its conformation. May be involved in regulation of gene expression, nucleoid organization and DNA protection. This is Nucleoid-associated protein Teth39_2199 from Thermoanaerobacter pseudethanolicus (strain ATCC 33223 / 39E) (Clostridium thermohydrosulfuricum).